The following is a 369-amino-acid chain: sn-glycerol-3-phosphate import ATP-binding protein UgpC 1 (369 aa).

In terms of domain architecture, ABC transporter spans 4–234 (ISIRGVKKNY…PVSRFVAGFV (231 aa)). Residue 36-43 (GPSGCGKS) coordinates ATP.

Belongs to the ABC transporter superfamily. sn-glycerol-3-phosphate importer (TC 3.A.1.1.3) family. As to quaternary structure, the complex is composed of two ATP-binding proteins (UgpC), two transmembrane proteins (UgpA and UgpE) and a solute-binding protein (UgpB).

It is found in the cell inner membrane. The catalysed reaction is sn-glycerol 3-phosphate(out) + ATP + H2O = sn-glycerol 3-phosphate(in) + ADP + phosphate + H(+). Its function is as follows. Part of the ABC transporter complex UgpBAEC involved in sn-glycerol-3-phosphate (G3P) import. Responsible for energy coupling to the transport system. The chain is sn-glycerol-3-phosphate import ATP-binding protein UgpC 1 from Rhizobium johnstonii (strain DSM 114642 / LMG 32736 / 3841) (Rhizobium leguminosarum bv. viciae).